A 188-amino-acid chain; its full sequence is Peptidyl-tRNA hydrolase (188 aa).

Residue tyrosine 14 coordinates tRNA. Residue histidine 19 is the Proton acceptor of the active site. Positions 64, 66, and 113 each coordinate tRNA.

The protein belongs to the PTH family. Monomer.

The protein localises to the cytoplasm. The catalysed reaction is an N-acyl-L-alpha-aminoacyl-tRNA + H2O = an N-acyl-L-amino acid + a tRNA + H(+). Functionally, hydrolyzes ribosome-free peptidyl-tRNAs (with 1 or more amino acids incorporated), which drop off the ribosome during protein synthesis, or as a result of ribosome stalling. Catalyzes the release of premature peptidyl moieties from peptidyl-tRNA molecules trapped in stalled 50S ribosomal subunits, and thus maintains levels of free tRNAs and 50S ribosomes. This is Peptidyl-tRNA hydrolase from Chloroflexus aggregans (strain MD-66 / DSM 9485).